The primary structure comprises 416 residues: Isobutyryl-CoA dehydrogenase, mitochondrial (416 aa).

A mitochondrion-targeting transit peptide spans 1–23; the sequence is MMLRGGCQRVGARLRGLRRGPRG. Residue Lys-51 is modified to N6-acetyllysine; alternate. At Lys-51 the chain carries N6-succinyllysine; alternate. FAD contacts are provided by residues 159-168 and 192-194; these read YCLTEPGSGS and FIS. Ser-168 lines the substrate pocket. An N6-acetyllysine modification is found at Lys-232. Position 272 is an N6-succinyllysine (Lys-272). 275–278 contacts substrate; that stretch reads NGGR. FAD-binding positions include Arg-303, 313 to 314, and 372 to 376; these read SQ and QMHGG. Glu-399 serves as the catalytic Proton acceptor. Position 401-403 (401-403) interacts with FAD; the sequence is SNE. Arg-411 contacts substrate.

It belongs to the acyl-CoA dehydrogenase family. In terms of assembly, homotetramer, formed by a dimer of dimers. The cofactor is FAD.

It localises to the mitochondrion. The catalysed reaction is 2-methylpropanoyl-CoA + oxidized [electron-transfer flavoprotein] + H(+) = 2-methylpropenoyl-CoA + reduced [electron-transfer flavoprotein]. It catalyses the reaction (2S)-2-methylbutanoyl-CoA + oxidized [electron-transfer flavoprotein] + H(+) = (2E)-2-methylbut-2-enoyl-CoA + reduced [electron-transfer flavoprotein]. The enzyme catalyses propanoyl-CoA + oxidized [electron-transfer flavoprotein] + H(+) = acryloyl-CoA + reduced [electron-transfer flavoprotein]. Its pathway is amino-acid degradation; L-valine degradation. Its function is as follows. Isobutyryl-CoA dehydrogenase which catalyzes the conversion of 2-methylpropanoyl-CoA to (2E)-2-methylpropenoyl-CoA in the valine catabolic pathway. To a lesser extent, also able to catalyze the oxidation of (2S)-2-methylbutanoyl-CoA. The protein is Isobutyryl-CoA dehydrogenase, mitochondrial (ACAD8) of Bos taurus (Bovine).